We begin with the raw amino-acid sequence, 331 residues long: Flavonol synthase 1 (331 aa).

Residues 191-292 enclose the Fe2OG dioxygenase domain; the sequence is DAIELLLKIN…RMSWPVFCSP (102 aa). Histidine 217, aspartate 219, and histidine 273 together coordinate Fe cation. Position 283 (arginine 283) interacts with 2-oxoglutarate.

The protein belongs to the iron/ascorbate-dependent oxidoreductase family. L-ascorbate is required as a cofactor. It depends on Fe(2+) as a cofactor. As to expression, expressed in young cromes.

The catalysed reaction is a (2R,3R)-dihydroflavonol + 2-oxoglutarate + O2 = a flavonol + succinate + CO2 + H2O. It carries out the reaction (2R,3R)-dihydrokaempferol + 2-oxoglutarate + O2 = kaempferol + succinate + CO2 + H2O + H(+). It catalyses the reaction (2R,3R)-dihydroquercetin + 2-oxoglutarate + O2 = quercetin + succinate + CO2 + H2O + H(+). The enzyme catalyses (2R,3R)-dihydromyricetin + 2-oxoglutarate + O2 = myricetin + succinate + CO2 + H2O + H(+). Its pathway is flavonoid metabolism. Its function is as follows. Catalyzes the formation of flavonols from dihydroflavonols. Can act on dihydrokaempferol to produce kaempferol, on dihydroquercetin to produce quercitin and on dihydromyricetin to produce myricetin. This is Flavonol synthase 1 from Crocosmia x crocosmiiflora (Montbretia).